Reading from the N-terminus, the 98-residue chain is Small ribosomal subunit protein uS19 (98 aa).

Positions 77–98 are disordered; the sequence is TRTFRGHAGGKAEKGGSAPKRK.

This sequence belongs to the universal ribosomal protein uS19 family.

Functionally, protein S19 forms a complex with S13 that binds strongly to the 16S ribosomal RNA. In Chlorobium luteolum (strain DSM 273 / BCRC 81028 / 2530) (Pelodictyon luteolum), this protein is Small ribosomal subunit protein uS19.